Reading from the N-terminus, the 261-residue chain is Cell division protein DivIB (261 aa).

Residues 1–27 (MEKGKVVVLEDRVPKLKERRRQKANRR) lie on the Cytoplasmic side of the membrane. The chain crosses the membrane as a helical span at residues 28–48 (LIAYLSFFFLFILCVLYFQSP). The segment at 47 to 117 (SPLGAVGHVE…PNTIAIHVRE (71 aa)) is alpha. Topologically, residues 49-261 (LGAVGHVEVS…KEDGDETTSP (213 aa)) are extracellular. A POTRA domain is found at 50–118 (GAVGHVEVSG…NTIAIHVREW (69 aa)). The interval 118–230 (WRRIAYVYDR…YPAIAAALDR (113 aa)) is beta. Positions 231–260 (NVKGVIHLEVGSYFVPYSPPKKEDGDETTS) are gamma.

The protein belongs to the FtsQ/DivIB family. DivIB subfamily.

It is found in the cell membrane. In terms of biological role, cell division protein that may be involved in stabilizing or promoting the assembly of the division complex. This chain is Cell division protein DivIB, found in Geobacillus kaustophilus (strain HTA426).